A 61-amino-acid chain; its full sequence is MAKTSMIVKQKREQKFKVREYTRCERCGRPHSVIRKFKLCRICFRELAYKGHIPGVKKASW.

Cysteine 24, cysteine 27, cysteine 40, and cysteine 43 together coordinate Zn(2+).

This sequence belongs to the universal ribosomal protein uS14 family. Zinc-binding uS14 subfamily. As to quaternary structure, part of the 30S ribosomal subunit. Contacts proteins S3 and S10. The cofactor is Zn(2+).

In terms of biological role, binds 16S rRNA, required for the assembly of 30S particles and may also be responsible for determining the conformation of the 16S rRNA at the A site. In Bacillus licheniformis (strain ATCC 14580 / DSM 13 / JCM 2505 / CCUG 7422 / NBRC 12200 / NCIMB 9375 / NCTC 10341 / NRRL NRS-1264 / Gibson 46), this protein is Small ribosomal subunit protein uS14C.